Reading from the N-terminus, the 229-residue chain is Aldehyde oxidoreductase iron-sulfur-binding subunit PaoA (229 aa).

The segment at 1-21 (MSNQGEYPEDNRVGKHEPHDL) is disordered. The tat-type signal signal peptide spans 1-53 (MSNQGEYPEDNRVGKHEPHDLSLTRRDLIKVSAATAATAVVYPHSTLAASVPA). Basic and acidic residues predominate over residues 9–21 (EDNRVGKHEPHDL). The region spanning 61-137 (MPLTLKVNGK…GAEITTIEGL (77 aa)) is the 2Fe-2S ferredoxin-type domain. [2Fe-2S] cluster is bound by residues Cys99, Cys104, Gly105, Cys107, Cys119, Cys158, Cys161, Cys208, and Cys210.

Heterotrimer composed of PaoA, PaoB and PaoC. The cofactor is [2Fe-2S] cluster. In terms of processing, exported by the Tat system. The position of the signal peptide cleavage has not been experimentally proven.

The protein localises to the periplasm. It carries out the reaction an aldehyde + A + H2O = a carboxylate + AH2 + H(+). The complex requires PaoD for activity. Oxidizes aldehydes to the corresponding carboxylic acids with a preference for aromatic aldehydes. It might play a role in the detoxification of aldehydes to avoid cell damage. This chain is Aldehyde oxidoreductase iron-sulfur-binding subunit PaoA, found in Escherichia coli (strain K12).